The sequence spans 115 residues: LSM complex subunit LSM7 (115 aa).

Positions 1 to 10 (MHQQHSKSEN) are enriched in basic and acidic residues. Residues 1-23 (MHQQHSKSENKPQQQRKKFEGPK) form a disordered region. Positions 25 to 108 (EAILDLAKYK…LVSLSSAEGS (84 aa)) constitute a Sm domain.

This sequence belongs to the snRNP Sm proteins family. As to quaternary structure, component of the heptameric LSM1-LSM7 complex that forms a seven-membered ring structure with a donut shape. The LSm subunits are arranged in the order LSM1, LSM2, LSM3, LSM6, LSM5, LSM7 and LSM4. Except for LSM1, where a C-terminal helix crosses the ring structure to form additional interactions with LSM3 and LSM6, each subunit interacts only with its two neighboring subunits. The LSM1-LSM7 complex interacts with PAT1; within the complex PAT1 has direct interactions with LSM2 and LSM3. The LSM1-LSM7 complex interacts with XRN1. Component of the heptameric LSM2-LSM8 complex that forms a seven-membered ring structure with a donut shape; an RNA strand can pass through the hole in the center of the ring structure. The LSm subunits are arranged in the order LSM8, LSM2, LSM3, LSM6, LSM5, LSM7 and LSM4. Component of the spliceosome U4/U6-U5 tri-snRNP complex composed of the U4, U6 and U5 snRNAs and at least PRP3, PRP4, PRP6, PRP8, PRP18, PRP31, PRP38, SNU13, SNU23, SNU66, SNU114, SPP381, SMB1, SMD1, SMD2, SMD3, SMX2, SMX3, LSM2, LSM3, LSM4, LSM5, LSM6, LSM7, LSM8, BRR2 and DIB1. May be found in a complex comprising LSM2-LSM7 without LSM1 or LSM8; the complex associates with pre-P RNA and snoRNA SNR5.

The protein localises to the nucleus. The protein resides in the nucleolus. Its subcellular location is the cytoplasm. Component of LSm protein complexes, which are involved in RNA processing and may function in a chaperone-like manner. Component of the cytoplasmic LSM1-LSM7 complex which is involved in mRNA degradation by activating the decapping step. Together with PAT1, the LSM1-LSM7 complex binds to osmotic stress-activated mRNAs to attenuate the osmotic stress response, probably by limiting ribosome access to the mRNA and consequently translation. Component of the nuclear LSM2-LSM8 complex, which is involved in spliceosome assembly. The LSM2-LSM8 complex plays a role in the biogenesis of the spliceosomal U4/U6-U5 tri-snRNP complex by accelerating PRP24-mediated annealing of U4/U6 di-snRNA. The LSM2-LSM8 complex binds U6 snRNA terminating with a non-cyclic 3' phosphate group. LSM2-LSM8 is probably also involved in degradation of nuclear pre-mRNA by targeting them for decapping. LSM2-LSM8 could be involved in processing of pre-tRNAs, pre-rRNAs and U3 snoRNA, although involvement may be indirect. In a complex that probably contains LSM2-LSM7, but not LSM1 or LSM8, associates with the precursor of the RNA component of RNase P (pre-P RNA) and may be involved in maturing pre-P RNA; the complex also associates with snoRNA SNR5. The polypeptide is LSM complex subunit LSM7 (LSM7) (Saccharomyces cerevisiae (strain ATCC 204508 / S288c) (Baker's yeast)).